We begin with the raw amino-acid sequence, 336 residues long: GTP 3',8-cyclase (336 aa).

Residues 17-238 form the Radical SAM core domain; it reads GFSRRFHYLR…WTQQNRNLTD (222 aa). Arginine 26 contributes to the GTP binding site. [4Fe-4S] cluster is bound by residues cysteine 33 and cysteine 37. S-adenosyl-L-methionine is bound at residue tyrosine 39. Cysteine 40 contacts [4Fe-4S] cluster. Arginine 75 lines the GTP pocket. An S-adenosyl-L-methionine-binding site is contributed by glycine 79. Threonine 106 lines the GTP pocket. Serine 130 is an S-adenosyl-L-methionine binding site. Lysine 167 provides a ligand contact to GTP. An S-adenosyl-L-methionine-binding site is contributed by methionine 201. Residues cysteine 264 and cysteine 267 each contribute to the [4Fe-4S] cluster site. GTP is bound at residue 269 to 271; the sequence is RLR. Cysteine 281 is a [4Fe-4S] cluster binding site.

It belongs to the radical SAM superfamily. MoaA family. In terms of assembly, monomer and homodimer. [4Fe-4S] cluster serves as cofactor.

The enzyme catalyses GTP + AH2 + S-adenosyl-L-methionine = (8S)-3',8-cyclo-7,8-dihydroguanosine 5'-triphosphate + 5'-deoxyadenosine + L-methionine + A + H(+). It participates in cofactor biosynthesis; molybdopterin biosynthesis. Functionally, catalyzes the cyclization of GTP to (8S)-3',8-cyclo-7,8-dihydroguanosine 5'-triphosphate. The sequence is that of GTP 3',8-cyclase from Tolumonas auensis (strain DSM 9187 / NBRC 110442 / TA 4).